Reading from the N-terminus, the 404-residue chain is Cysteine desulfurase IscS (404 aa).

Residues 75 to 76 (AT), Asn-155, Gln-183, and 203 to 205 (SGH) each bind pyridoxal 5'-phosphate. Residue Lys-206 is modified to N6-(pyridoxal phosphate)lysine. Thr-243 serves as a coordination point for pyridoxal 5'-phosphate. The active-site Cysteine persulfide intermediate is Cys-328. Residue Cys-328 participates in [2Fe-2S] cluster binding.

This sequence belongs to the class-V pyridoxal-phosphate-dependent aminotransferase family. NifS/IscS subfamily. As to quaternary structure, homodimer. Forms a heterotetramer with IscU, interacts with other sulfur acceptors. Pyridoxal 5'-phosphate serves as cofactor.

It is found in the cytoplasm. The enzyme catalyses (sulfur carrier)-H + L-cysteine = (sulfur carrier)-SH + L-alanine. The protein operates within cofactor biosynthesis; iron-sulfur cluster biosynthesis. Its function is as follows. Master enzyme that delivers sulfur to a number of partners involved in Fe-S cluster assembly, tRNA modification or cofactor biosynthesis. Catalyzes the removal of elemental sulfur atoms from cysteine to produce alanine. Functions as a sulfur delivery protein for Fe-S cluster synthesis onto IscU, an Fe-S scaffold assembly protein, as well as other S acceptor proteins. The polypeptide is Cysteine desulfurase IscS (Shewanella sp. (strain MR-4)).